A 290-amino-acid polypeptide reads, in one-letter code: ATP synthase gamma chain (290 aa).

The protein belongs to the ATPase gamma chain family. In terms of assembly, F-type ATPases have 2 components, CF(1) - the catalytic core - and CF(0) - the membrane proton channel. CF(1) has five subunits: alpha(3), beta(3), gamma(1), delta(1), epsilon(1). CF(0) has three main subunits: a, b and c.

The protein localises to the cell inner membrane. Its function is as follows. Produces ATP from ADP in the presence of a proton gradient across the membrane. The gamma chain is believed to be important in regulating ATPase activity and the flow of protons through the CF(0) complex. In Bacteroides fragilis (strain YCH46), this protein is ATP synthase gamma chain.